Here is a 253-residue protein sequence, read N- to C-terminus: Large ribosomal subunit protein mL57 (253 aa).

The transit peptide at 1-28 (MENSMMFISRSLRRPVTALNCNLQSVRT) directs the protein to the mitochondrion.

It belongs to the ribonuclease III family. Mitochondrion-specific ribosomal protein mL57 subfamily. In terms of assembly, component of the mitochondrial large ribosomal subunit (mt-LSU). Mature yeast 74S mitochondrial ribosomes consist of a small (37S) and a large (54S) subunit. The 37S small subunit contains a 15S ribosomal RNA (15S mt-rRNA) and 34 different proteins. The 54S large subunit contains a 21S rRNA (21S mt-rRNA) and 46 different proteins. mL57 forms a heterodimer with mL44 and stabilizes rRNA expansion segments 1/2 at a membrane-facing protuberance close to the point of attachment of the ribosome to the translocon in the membrane.

Its subcellular location is the mitochondrion. Its function is as follows. Component of the mitochondrial ribosome (mitoribosome), a dedicated translation machinery responsible for the synthesis of mitochondrial genome-encoded proteins, including at least some of the essential transmembrane subunits of the mitochondrial respiratory chain. The mitoribosomes are attached to the mitochondrial inner membrane and translation products are cotranslationally integrated into the membrane. The polypeptide is Large ribosomal subunit protein mL57 (MRPL15) (Saccharomyces cerevisiae (strain ATCC 204508 / S288c) (Baker's yeast)).